We begin with the raw amino-acid sequence, 72 residues long: Translation initiation factor IF-1 (72 aa).

The 72-residue stretch at 1–72 folds into the S1-like domain; the sequence is MAREDLIEVE…SRGRITYRKK (72 aa).

It belongs to the IF-1 family. As to quaternary structure, component of the 30S ribosomal translation pre-initiation complex which assembles on the 30S ribosome in the order IF-2 and IF-3, IF-1 and N-formylmethionyl-tRNA(fMet); mRNA recruitment can occur at any time during PIC assembly.

It is found in the cytoplasm. Functionally, one of the essential components for the initiation of protein synthesis. Stabilizes the binding of IF-2 and IF-3 on the 30S subunit to which N-formylmethionyl-tRNA(fMet) subsequently binds. Helps modulate mRNA selection, yielding the 30S pre-initiation complex (PIC). Upon addition of the 50S ribosomal subunit IF-1, IF-2 and IF-3 are released leaving the mature 70S translation initiation complex. This Acholeplasma laidlawii (strain PG-8A) protein is Translation initiation factor IF-1.